Reading from the N-terminus, the 134-residue chain is MATFFLEVLTPDRKFFSGEAECVIFKSSDGEMGVLAKHAPTVSAVSVGPLRINAQGKWIEAVVTEGFAKIMPDKVVILTDTAEYPEEIDINRAKAAKQRAEERLQKKLSQLEYMRSKTALARAMARLSATNRRR.

It belongs to the ATPase epsilon chain family. In terms of assembly, F-type ATPases have 2 components, CF(1) - the catalytic core - and CF(0) - the membrane proton channel. CF(1) has five subunits: alpha(3), beta(3), gamma(1), delta(1), epsilon(1). CF(0) has three main subunits: a, b and c.

The protein resides in the cell membrane. In terms of biological role, produces ATP from ADP in the presence of a proton gradient across the membrane. This Ruminiclostridium cellulolyticum (strain ATCC 35319 / DSM 5812 / JCM 6584 / H10) (Clostridium cellulolyticum) protein is ATP synthase epsilon chain.